The primary structure comprises 287 residues: mRNA-capping enzyme regulatory subunit OPG124 (287 aa).

It belongs to the orthopoxvirus mRNA-capping enzyme regulatory subunit family. As to quaternary structure, interacts with the catalytic subunit OPG113.

It is found in the virion. Its function is as follows. Regulatory subunit of the mRNA cap enzyme which stabilizes the catalytic subunit and enhances its methyltransferase activity through an allosteric mechanism. Heterodimeric mRNA capping enzyme catalyzes the linkage of a N7-methyl-guanosine moiety to the first transcribed nucleotide (cap 0 structure), whereas the methyltransferase OPG102 is responsible for a second methylation at the 2'-O position of the ribose (cap 1 structure). Also involved in early viral gene transcription termination and intermediate viral gene transcription initiation. Early gene transcription termination requires the termination factor VTF, the DNA-dependent ATPase NPH-I/OPG123 and the RAP94/OPG109 subunit of the viral RNA polymerase, as well as the presence of a specific termination motif. Binds, together with RAP94/OPG109, to the termination motif 5'-UUUUUNU-3' in the nascent early mRNA. This is mRNA-capping enzyme regulatory subunit OPG124 (OPG124) from Variola virus (isolate Human/India/Ind3/1967) (VARV).